The following is a 208-amino-acid chain: Riboflavin synthase (208 aa).

Lumazine-binding repeat units follow at residues 1–97 and 98–195; these read MFTG…MGGH and IISG…VDTT. Residues 4-6, 48-50, 62-67, 101-103, K137, 146-148, and 160-165 each bind 2,4-dihydroxypteridine; these read GIV, CLT, DIMKIT, GHI, SLT, and SIIPET.

In terms of assembly, homotrimer.

The enzyme catalyses 2 6,7-dimethyl-8-(1-D-ribityl)lumazine + H(+) = 5-amino-6-(D-ribitylamino)uracil + riboflavin. Its pathway is cofactor biosynthesis; riboflavin biosynthesis; riboflavin from 2-hydroxy-3-oxobutyl phosphate and 5-amino-6-(D-ribitylamino)uracil: step 2/2. Functionally, catalyzes the dismutation of two molecules of 6,7-dimethyl-8-ribityllumazine, resulting in the formation of riboflavin and 5-amino-6-(D-ribitylamino)uracil. In Buchnera aphidicola subsp. Schizaphis graminum (strain Sg), this protein is Riboflavin synthase (ribE).